Reading from the N-terminus, the 105-residue chain is Large ribosomal subunit protein uL24 (105 aa).

The protein belongs to the universal ribosomal protein uL24 family. Part of the 50S ribosomal subunit.

In terms of biological role, one of two assembly initiator proteins, it binds directly to the 5'-end of the 23S rRNA, where it nucleates assembly of the 50S subunit. One of the proteins that surrounds the polypeptide exit tunnel on the outside of the subunit. The protein is Large ribosomal subunit protein uL24 of Staphylococcus carnosus (strain TM300).